Reading from the N-terminus, the 343-residue chain is Cytosolic Fe-S cluster assembly factor CFD1 (343 aa).

15–22 (GKGGVGKS) contacts ATP. Polar residues-rich tracts occupy residues 80 to 91 (PSSDGLNGSQRA) and 99 to 110 (ESSSSTVETAPQ). Residues 80 to 110 (PSSDGLNGSQRANKPDDSNESSSSTVETAPQ) are disordered. 2 residues coordinate [4Fe-4S] cluster: cysteine 241 and cysteine 244.

It belongs to the Mrp/NBP35 ATP-binding proteins family. NUBP2/CFD1 subfamily. Heterotetramer of 2 NBP35 and 2 CFD1 chains. It depends on [4Fe-4S] cluster as a cofactor.

It is found in the cytoplasm. Its function is as follows. Component of the cytosolic iron-sulfur (Fe/S) protein assembly (CIA) machinery. Required for maturation of extramitochondrial Fe-S proteins. The NBP35-CFD1 heterotetramer forms a Fe-S scaffold complex, mediating the de novo assembly of an Fe-S cluster and its transfer to target apoproteins. The polypeptide is Cytosolic Fe-S cluster assembly factor CFD1 (Coccidioides immitis (strain RS) (Valley fever fungus)).